A 99-amino-acid chain; its full sequence is Protein Frey (99 aa).

The helical transmembrane segment at 7–29 (GALYPRAGLSLFLLYLVLAAVLL) threads the bilayer. The tract at residues 65-88 (PKHPWPRGPRPLLSRAQQRKRDGP) is disordered.

As to quaternary structure, interacts with SPPL2C (via active sites); the interaction stabilizes FREY1 protein and inhibits SPPL2C proteolytic activity. Interacts with IZUMO1; the interaction retains IZUMO1 at the endoplasmic reticulum membrane and coordinates IZUMO1 complex assembly.

The protein localises to the endoplasmic reticulum membrane. In terms of biological role, key regulator for male fertility expressed transiently in round spermatids where it recruits IZUMO1 at the endoplasmic reticulum (ER) membrane and coordinates the oolemmal binding multimeric complex (IZUMO1 complex) assembly. Upon complete assembly of the IZUMO1 complex, its ER retention is released, facilitating IZUMO1 complex export to the acrosome. Through the interaction with SPPL2C, inhibits its intramembrane protease activity directly accessing the catalytic center of an I-CLiP. The polypeptide is Protein Frey (Ailuropoda melanoleuca (Giant panda)).